We begin with the raw amino-acid sequence, 439 residues long: L-tryptophan decarboxylase (439 aa).

The protein belongs to the phosphatidylserine decarboxylase family.

The enzyme catalyses L-tryptophan + H(+) = tryptamine + CO2. Its pathway is secondary metabolite biosynthesis. In terms of biological role, L-tryptophan decarboxylase; part of the gene cluster that mediates the biosynthesis of psilocybin, a psychotropic tryptamine-derived natural product. The first step in the pathway is the decarboxylation of L-tryptophan to tryptamine by the decarboxylase psiD. PsiD does not decarboxylate phenylalanine, tyrosine, or 5-hydroxy- L -tryptophan (5-HTP). 4-hydroxy-L-tryptophan is accepted as substrate by psiD as well. The cytochrome P450 monooxygenase psiH then converts tryptamine to 4-hydroxytryptamine. The kinase psiK catalyzes the 4-O-phosphorylation step by converting 4-hydroxytryptamine into norbaeocystin. The methyltransferase psiM then catalyzes iterative methyl transfer to the amino group of norbaeocystin to yield psilocybin via a monomethylated intermediate, baeocystin. 4-hydroxy-6-methyl-l-tryptophancan also be converted the decarboxylase PsiD, kinase PsiK, and methyltransferase PsiM into respectively 6-methyl-norbaeocystin, 6-methylbaeocystin, and 6-methylpsilocybin. This chain is L-tryptophan decarboxylase, found in Psilocybe cyanescens.